A 185-amino-acid chain; its full sequence is UPF0397 protein PAM_019 (185 aa).

5 helical membrane-spanning segments follow: residues 13-33, 42-62, 69-89, 109-129, and 143-163; these read IGLS…PVGF, AFLA…VGLI, FILF…IGFI, IVYF…FFAP, and VYLQ…VVGI.

This sequence belongs to the UPF0397 family.

It is found in the cell membrane. The sequence is that of UPF0397 protein PAM_019 from Onion yellows phytoplasma (strain OY-M).